A 188-amino-acid chain; its full sequence is Archaetidylinositol phosphate synthase (188 aa).

2 helical membrane passes run 20-40 (LASLGITPNQLTIIGFLITLL) and 51-71 (ILAGIILAVGAFLDALDGALA). Mg(2+)-binding residues include D64, D67, D85, and D89. D89 serves as the catalytic Proton acceptor. 2 helical membrane passes run 96–116 (ILFGIALGGLVRWDVTFLTLI) and 147–167 (IIIIFIASLFNAVKIGVYLVA).

The protein belongs to the CDP-alcohol phosphatidyltransferase class-I family. The cofactor is Mn(2+). Mg(2+) serves as cofactor.

Its subcellular location is the cell membrane. The enzyme catalyses CDP-2,3-bis-O-(phytanyl)-sn-glycerol + 1D-myo-inositol 3-phosphate = saturated 1-archaetidyl-1D-myo-inositol 3-phosphate + CMP + H(+). It functions in the pathway lipid metabolism; phospholipid metabolism. Catalyzes the formation of archaetidylinositol phosphate (AIP) from CDP-archaeol (CDP-ArOH or CDP-2,3-bis-(O-phytanyl)-sn-glycerol) and 1L-myo-inositol 1-phosphate (IP or 1D-myo-inositol 3-phosphate). AIP is a precursor of archaetidyl-myo-inositol (AI), an ether-type inositol phospholipid ubiquitously distributed in archaea membranes and essential for glycolipid biosynthesis in archaea. The protein is Archaetidylinositol phosphate synthase of Pyrococcus horikoshii (strain ATCC 700860 / DSM 12428 / JCM 9974 / NBRC 100139 / OT-3).